The following is an 89-amino-acid chain: Small ribosomal subunit protein uS15 (89 aa).

The protein belongs to the universal ribosomal protein uS15 family. Part of the 30S ribosomal subunit. Forms a bridge to the 50S subunit in the 70S ribosome, contacting the 23S rRNA.

In terms of biological role, one of the primary rRNA binding proteins, it binds directly to 16S rRNA where it helps nucleate assembly of the platform of the 30S subunit by binding and bridging several RNA helices of the 16S rRNA. Its function is as follows. Forms an intersubunit bridge (bridge B4) with the 23S rRNA of the 50S subunit in the ribosome. The polypeptide is Small ribosomal subunit protein uS15 (Pasteurella multocida (strain Pm70)).